Here is a 407-residue protein sequence, read N- to C-terminus: UDP-N-acetylglucosamine--N-acetylmuramyl-(pentapeptide) pyrophosphoryl-undecaprenol N-acetylglucosamine transferase (407 aa).

A disordered region spans residues 1–21 (MNNSVREPTRGRRGSPPVADA). UDP-N-acetyl-alpha-D-glucosamine is bound by residues 38–40 (TAG), asparagine 157, serine 228, and glutamine 324.

Belongs to the glycosyltransferase 28 family. MurG subfamily.

It localises to the cell membrane. The catalysed reaction is di-trans,octa-cis-undecaprenyl diphospho-N-acetyl-alpha-D-muramoyl-L-alanyl-D-glutamyl-meso-2,6-diaminopimeloyl-D-alanyl-D-alanine + UDP-N-acetyl-alpha-D-glucosamine = di-trans,octa-cis-undecaprenyl diphospho-[N-acetyl-alpha-D-glucosaminyl-(1-&gt;4)]-N-acetyl-alpha-D-muramoyl-L-alanyl-D-glutamyl-meso-2,6-diaminopimeloyl-D-alanyl-D-alanine + UDP + H(+). It functions in the pathway cell wall biogenesis; peptidoglycan biosynthesis. In terms of biological role, cell wall formation. Catalyzes the transfer of a GlcNAc subunit on undecaprenyl-pyrophosphoryl-MurNAc-pentapeptide (lipid intermediate I) to form undecaprenyl-pyrophosphoryl-MurNAc-(pentapeptide)GlcNAc (lipid intermediate II). This Mycobacterium leprae (strain TN) protein is UDP-N-acetylglucosamine--N-acetylmuramyl-(pentapeptide) pyrophosphoryl-undecaprenol N-acetylglucosamine transferase.